A 122-amino-acid polypeptide reads, in one-letter code: Small ribosomal subunit protein uS13 (122 aa).

The disordered stretch occupies residues 96-122; that stretch reads PVRGQRTRTNARTRKGPKKTVGVRRAK.

Belongs to the universal ribosomal protein uS13 family. Part of the 30S ribosomal subunit. Forms a loose heterodimer with protein S19. Forms two bridges to the 50S subunit in the 70S ribosome.

In terms of biological role, located at the top of the head of the 30S subunit, it contacts several helices of the 16S rRNA. In the 70S ribosome it contacts the 23S rRNA (bridge B1a) and protein L5 of the 50S subunit (bridge B1b), connecting the 2 subunits; these bridges are implicated in subunit movement. Contacts the tRNAs in the A and P-sites. This Halothermothrix orenii (strain H 168 / OCM 544 / DSM 9562) protein is Small ribosomal subunit protein uS13.